A 304-amino-acid polypeptide reads, in one-letter code: Phospholipase A1 (304 aa).

Cys6 and Cys90 are disulfide-bonded. Asn61 carries N-linked (GlcNAc...) asparagine glycosylation. Ser140 acts as the Nucleophile in catalysis. Residue Asp168 is the Charge relay system of the active site. Intrachain disulfides connect Cys179–Cys184 and Cys222–Cys231. His233 serves as the catalytic Charge relay system. 3 disulfides stabilise this stretch: Cys248/Cys272, Cys249/Cys297, and Cys265/Cys270.

This sequence belongs to the AB hydrolase superfamily. Lipase family. Expressed by the venom gland.

Its subcellular location is the secreted. It carries out the reaction a 1,2-diacyl-sn-glycero-3-phosphocholine + H2O = a 2-acyl-sn-glycero-3-phosphocholine + a fatty acid + H(+). Catalyzes the hydrolysis of phosphatidylcholine with phospholipase A1 activity. May act as an allergen and induce hemolytic activity. This chain is Phospholipase A1, found in Vespa velutina (Asian yellow-legged hornet).